A 512-amino-acid polypeptide reads, in one-letter code: Monocarboxylate transporter 14 (512 aa).

Topologically, residues M1–D29 are cytoplasmic. 12 helical membrane passes run I30 to M50, W76 to I96, A105 to V125, F129 to V149, L161 to L181, A193 to M211, M317 to I337, F355 to V375, I381 to L401, L410 to V430, I446 to F466, and F476 to I496. At Q497–V512 the chain is on the cytoplasmic side.

It belongs to the major facilitator superfamily. Monocarboxylate porter (TC 2.A.1.13) family.

It localises to the cell membrane. In terms of biological role, proton-linked monocarboxylate transporter. May catalyze the transport of monocarboxylates across the plasma membrane. In Mus musculus (Mouse), this protein is Monocarboxylate transporter 14 (Slc16a14).